The chain runs to 423 residues: Zinc finger and BTB domain-containing protein 6 (423 aa).

Positions 33–97 constitute a BTB domain; sequence CDVSIYINDT…CYTGALEVKR (65 aa). Serine 201 carries the phosphoserine modification. C2H2-type zinc fingers lie at residues 300–322, 325–347, 353–375, and 381–404; these read HQCPRCPRGFLHVENYLRHLKMH, FLCLQCGKTFTQKKNLNRHIRGH, FQCTVCLKTFTAKSTLQDHLNIH, and YKCHCCDMDFKHKSALKKHLTSVH.

It is found in the nucleus. Its function is as follows. May be involved in transcriptional regulation. The protein is Zinc finger and BTB domain-containing protein 6 (Zbtb6) of Mus musculus (Mouse).